The chain runs to 286 residues: 33 kDa chaperonin (286 aa).

Cystine bridges form between Cys225–Cys227 and Cys258–Cys261.

Belongs to the HSP33 family. Under oxidizing conditions two disulfide bonds are formed involving the reactive cysteines. Under reducing conditions zinc is bound to the reactive cysteines and the protein is inactive.

It localises to the cytoplasm. Redox regulated molecular chaperone. Protects both thermally unfolding and oxidatively damaged proteins from irreversible aggregation. Plays an important role in the bacterial defense system toward oxidative stress. The chain is 33 kDa chaperonin from Shewanella putrefaciens (strain CN-32 / ATCC BAA-453).